The chain runs to 415 residues: MFS-type transporter FVEG_12626 (415 aa).

Positions 1 to 18 (MDPDTEQMRVEKPNHEQP) are enriched in basic and acidic residues. The interval 1–22 (MDPDTEQMRVEKPNHEQPKPNT) is disordered. 6 consecutive transmembrane segments (helical) span residues 27–47 (GGFKAWSVVVGAFCGLFVGVF), 63–83 (TVSWIPAISMFIMFITGPFVG), 93–113 (YLLLAGTLLHVFGLMMASISS), 118–138 (YILSQAICSPLGAAMVLYPSF), 151–171 (LALGITASGSSLGGTILPIVV), and 178–198 (IGFGWTMRACAFLLLGLLLVT). Asparagine 199 is a glycosylation site (N-linked (GlcNAc...) asparagine). 6 helical membrane passes run 227-247 (FILTSLAGFFYSMGMFIPITF), 264-284 (YLVSIFNASSGIGRILPGYIA), 290-310 (FNVSIAAATLSTIFMLGLWLP), 318-338 (IAFAALFGFSSGTYTAISPAL), 354-374 (TMYAFMSVAALTGSPIGGALI), and 386-406 (VFAGCMLGAGTVFYVLARLYI).

This sequence belongs to the major facilitator superfamily. Monocarboxylate porter (TC 2.A.1.13) family.

Its subcellular location is the membrane. Functionally, MFS-type transporter; part of the Fusarium detoxification of benzoxazolinone cluster 2 (FDB2) involved in the degradation of benzoxazolinones produced by the host plant. Maize, wheat, and rye produce the 2 benzoxazinone phytoanticipins 2,4-dihy-droxy-7-methoxy-1,4-benzoxazin-3-one (DIMBOA) and 2,4-dihydroxy-1,4-benzoxazin-3-one (DIBOA) that, due to their inherent instability once released, spontaneously degrade to the more stable corresponding benzoxazolinones, 6-methoxy-2-benzoxazolinone (MBOA) and 2-benzoxazolinone (BOA), respectively. The protein is MFS-type transporter FVEG_12626 of Gibberella moniliformis (strain M3125 / FGSC 7600) (Maize ear and stalk rot fungus).